Reading from the N-terminus, the 115-residue chain is Large ribosomal subunit protein bL20 (115 aa).

This sequence belongs to the bacterial ribosomal protein bL20 family.

Functionally, binds directly to 23S ribosomal RNA and is necessary for the in vitro assembly process of the 50S ribosomal subunit. It is not involved in the protein synthesizing functions of that subunit. This Pelodictyon phaeoclathratiforme (strain DSM 5477 / BU-1) protein is Large ribosomal subunit protein bL20.